The sequence spans 262 residues: Ornithine carbamoyltransferase (262 aa).

Residues 3–7, glutamine 30, arginine 54, and 81–84 contribute to the carbamoyl phosphate site; these read STRTR and HPTQ. Residues asparagine 114, aspartate 178, and 182 to 183 each bind L-ornithine; that span reads SM. Residues 219–222 and threonine 247 contribute to the carbamoyl phosphate site; that span reads HCLP.

The protein belongs to the aspartate/ornithine carbamoyltransferase superfamily. OTCase family.

It localises to the cytoplasm. It carries out the reaction carbamoyl phosphate + L-ornithine = L-citrulline + phosphate + H(+). It participates in amino-acid biosynthesis; L-arginine biosynthesis; L-arginine from L-ornithine and carbamoyl phosphate: step 1/3. Reversibly catalyzes the transfer of the carbamoyl group from carbamoyl phosphate (CP) to the N(epsilon) atom of ornithine (ORN) to produce L-citrulline. The chain is Ornithine carbamoyltransferase (argF) from Neisseria polysaccharea.